Reading from the N-terminus, the 508-residue chain is ATP synthase subunit alpha, chloroplastic (508 aa).

Position 172–179 (172–179 (GDRQTGKT)) interacts with ATP.

It belongs to the ATPase alpha/beta chains family. In terms of assembly, F-type ATPases have 2 components, CF(1) - the catalytic core - and CF(0) - the membrane proton channel. CF(1) has five subunits: alpha(3), beta(3), gamma(1), delta(1), epsilon(1). CF(0) has four main subunits: a, b, b' and c.

It is found in the plastid. The protein localises to the chloroplast thylakoid membrane. It carries out the reaction ATP + H2O + 4 H(+)(in) = ADP + phosphate + 5 H(+)(out). In terms of biological role, produces ATP from ADP in the presence of a proton gradient across the membrane. The alpha chain is a regulatory subunit. The sequence is that of ATP synthase subunit alpha, chloroplastic from Psilotum nudum (Whisk fern).